The primary structure comprises 187 residues: Glutathione peroxidase 7 (187 aa).

The N-terminal stretch at 1–19 is a signal peptide; it reads MVAATVAAAWLLLWAAACA. The active site involves Cys-57.

The protein belongs to the glutathione peroxidase family. Expressed in esophageal epithelial cells; expression is up-regulated after exposure to acidic bile acids.

It localises to the secreted. The enzyme catalyses 2 glutathione + H2O2 = glutathione disulfide + 2 H2O. In terms of biological role, it protects esophageal epithelia from hydrogen peroxide-induced oxidative stress. It suppresses acidic bile acid-induced reactive oxygen species (ROS) and protects against oxidative DNA damage and double-strand breaks. In Homo sapiens (Human), this protein is Glutathione peroxidase 7 (GPX7).